A 141-amino-acid chain; its full sequence is MRQNMSILPPSSFSRNFLLVRCSPIQVWKYSMNTLCTMHGWMKLYLEYQRWNCMLRLSASIELEVFMDVPIFIRTYYRPANMDDSFRYGIIFRMYDLAVQLQWGNVMKLLLVTKTQVEKKKALNLNVSKTRDGRGGLNQQG.

The protein resides in the mitochondrion. This is an uncharacterized protein from Arabidopsis thaliana (Mouse-ear cress).